The sequence spans 678 residues: RNA helicase NPH-II (678 aa).

One can recognise a Helicase ATP-binding domain in the interval 175-351; the sequence is FESWIHHVPV…EFFTESVFVH (177 aa). 188 to 195 contributes to the ATP binding site; it reads GDTGVGKT. Residues 300-303 carry the DEXH box motif; the sequence is DEVH. A Helicase C-terminal domain is found at 371 to 546; it reads SLNKFMYIEE…VFDLQLPEDL (176 aa).

Belongs to the DEAD box helicase family. DEAH subfamily. As to quaternary structure, monomer.

Its subcellular location is the virion. It carries out the reaction ATP + H2O = ADP + phosphate + H(+). Its function is as follows. NTP-dependent helicase that catalyzes unidirectional unwinding of 3'tailed duplex RNAs and plays an important role during transcription of early mRNAs, presumably by preventing R-loop formation behind the elongating RNA polymerase. Might also play a role in the export of newly synthesized mRNA chains out of the core into the cytoplasm. Required for replication and propagation of viral particles. The polypeptide is RNA helicase NPH-II (OPG084) (Oryctolagus cuniculus (Rabbit)).